The following is a 704-amino-acid chain: Boron transporter 1 (704 aa).

Residues 1–35 (MEETFVPFEGIKNDLKGRLMCYKQDWTGGFKAGFR) are Cytoplasmic-facing. A helical transmembrane segment spans residues 36 to 56 (ILAPTTYIFFASAIPVISFGE). At 57-75 (QLERSTDGVLTAVQTLAST) the chain is on the extracellular side. The helical transmembrane segment at 76-96 (AICGMIHSIIGGQPLLILGVA) threads the bilayer. Over 97–120 (EPTVIMYTFMFNFAKARPELGRDL) the chain is Cytoplasmic. Residues 121 to 141 (FLAWSGWVCVWTALMLFVLAI) form a helical membrane-spanning segment. Over 142–155 (CGACSIINRFTRVA) the chain is Extracellular. The chain crosses the membrane as a helical span at residues 156-176 (GELFGLLIAMLFMQQAIKGLV). Residues 177-195 (DEFRIPERENQKLKEFLPS) lie on the Cytoplasmic side of the membrane. A helical membrane pass occupies residues 196-216 (WRFANGMFALVLSFGLLLTGL). The Extracellular portion of the chain corresponds to 217-233 (RSRKARSWRYGTGWLRS). The helical transmembrane segment at 234-254 (LIADYGVPLMVLVWTGVSYIP) threads the bilayer. Residues 255-289 (AGDVPKGIPRRLFSPNPWSPGAYGNWTVVKEMLDV) lie on the Cytoplasmic side of the membrane. The helical transmembrane segment at 290-310 (PIVYIIGAFIPASMIAVLYYF) threads the bilayer. Residues 311 to 337 (DHSVASQLAQQKEFNLRKPSSYHYDLL) lie on the Extracellular side of the membrane. A helical membrane pass occupies residues 338–358 (LLGFLTLMCGLLGVPPSNGVI). Over 359 to 480 (PQSPMHTKSL…STMVGGCVAA (122 aa)) the chain is Cytoplasmic. The chain crosses the membrane as a helical span at residues 481-501 (MPILKMIPTSVLWGYFAFMAI). Topologically, residues 502–557 (ESLPGNQFWERILLLFTAPSRRFKVLEDYHATFVETVPFKTIAMFTLFQTTYLLIC) are extracellular. Residues 558 to 578 (FGLTWIPIAGVMFPLMIMFLI) form a helical membrane-spanning segment. Over 579–704 (PVRQYLLPRF…RSPLNQSSSN (126 aa)) the chain is Cytoplasmic. Residues 641 to 704 (EFRHTSSPKV…RSPLNQSSSN (64 aa)) form a disordered region. The span at 647–664 (SPKVTSSSSTPVNNRSLS) shows a compositional bias: low complexity.

This sequence belongs to the anion exchanger (TC 2.A.31.3) family. As to expression, expressed in proximal side of various root cells, notably in the columella, lateral root cap, epidermis and endodermis in tip and elongation zones of the root. Also detected in the epidermis, cortex, endodermis, and stele cells of the root hair zone. Observed in cotyledons and hypocotyls.

The protein localises to the cell membrane. It is found in the endosome membrane. It localises to the vacuole membrane. Its function is as follows. Efflux-type boron (B) transporter for xylem loading, responsive of boron translocation from roots to shoots under boron limitation. Boron is essential for maintaining the integrity of plants cell walls. The protein is Boron transporter 1 of Arabidopsis thaliana (Mouse-ear cress).